Here is a 173-residue protein sequence, read N- to C-terminus: Insertion element IS150 protein InsJ (173 aa).

It belongs to the IS150/IS1296 orfA family.

The polypeptide is Insertion element IS150 protein InsJ (insJ) (Escherichia coli (strain K12)).